The sequence spans 739 residues: BEL1-like homeodomain protein 2 (739 aa).

2 disordered regions span residues 23-73 and 143-222; these read SQDY…ESSV and LMNP…NSQT. The span at 41-58 shows a compositional bias: polar residues; that stretch reads NFSNGFDRSDSPNLTTQQ. Residues 145 to 155 are compositionally biased toward pro residues; it reads NPPPPQQPPSP. Residues 179 to 190 show a composition bias toward low complexity; sequence TNTTHHQNYTNH. The tract at residues 316–332 is SR/KY domain; sequence SRYTTAAQELLEEFCSV. Residues 341 to 378 form a disordered region; the sequence is KLGNSSNPNTCGGDGGGSSPSSAGANKEHPPLSASDRI. The interval 376–447 is BELL domain; that stretch reads DRIEHQRRKV…CLKDAVAAQL (72 aa). A DNA-binding region (homeobox) is located at residues 498-560; that stretch reads AWRPQRGLPE…NARVRLWKPM (63 aa). Positions 567–627 are disordered; it reads QESKEREREE…TAPDASDADA (61 aa). Positions 576–585 are enriched in acidic residues; that stretch reads EELEENEEDQ. A compositionally biased stretch (basic and acidic residues) spans 586–596; sequence ETKNSNDDKST. Residues 597–627 show a composition bias toward low complexity; that stretch reads KSNNNESNFTAVRTTSQTPTTTAPDASDADA.

This sequence belongs to the TALE/BELL homeobox family. As to quaternary structure, may form heterodimeric complexes with TALE/KNOX proteins STM, KNAT1/BP, KNAT2 and KNAT5. Interacts with OFP1, OFP2, OFP4 and OFP5. Interacts with KNATM, isoform KNATM-B. As to expression, expressed in lateral organs.

The protein localises to the nucleus. Its function is as follows. Transcription factor that establishes leaf shape by repressing growth in specific subdomains of the leaf. Negatively regulates knox homeobox gene KNAT1/BP expression. The protein is BEL1-like homeodomain protein 2 (BLH2) of Arabidopsis thaliana (Mouse-ear cress).